Reading from the N-terminus, the 293-residue chain is Acetyl-coenzyme A carboxylase carboxyl transferase subunit beta (293 aa).

One can recognise a CoA carboxyltransferase N-terminal domain in the interval 29-293 (LWSKCPECGQ…GCKPMELTSA (265 aa)). 4 residues coordinate Zn(2+): C33, C36, C52, and C55. A C4-type zinc finger spans residues 33–55 (CPECGQVVYLKDLKLNASVCANC).

This sequence belongs to the AccD/PCCB family. In terms of assembly, acetyl-CoA carboxylase is a heterohexamer composed of biotin carboxyl carrier protein (AccB), biotin carboxylase (AccC) and two subunits each of ACCase subunit alpha (AccA) and ACCase subunit beta (AccD). It depends on Zn(2+) as a cofactor.

The protein localises to the cytoplasm. It carries out the reaction N(6)-carboxybiotinyl-L-lysyl-[protein] + acetyl-CoA = N(6)-biotinyl-L-lysyl-[protein] + malonyl-CoA. It participates in lipid metabolism; malonyl-CoA biosynthesis; malonyl-CoA from acetyl-CoA: step 1/1. Functionally, component of the acetyl coenzyme A carboxylase (ACC) complex. Biotin carboxylase (BC) catalyzes the carboxylation of biotin on its carrier protein (BCCP) and then the CO(2) group is transferred by the transcarboxylase to acetyl-CoA to form malonyl-CoA. This is Acetyl-coenzyme A carboxylase carboxyl transferase subunit beta from Synechococcus sp. (strain CC9605).